The following is a 277-amino-acid chain: Large ribosomal subunit protein uL2 (277 aa).

Residues 222 to 277 form a disordered region; the sequence is GVTMNPVDHPHGGGEGRTSGGRNPVTPWGFPTKGKKTRNNKATDKFIVSSRHKRKK.

It belongs to the universal ribosomal protein uL2 family. As to quaternary structure, part of the 50S ribosomal subunit. Forms a bridge to the 30S subunit in the 70S ribosome.

Its function is as follows. One of the primary rRNA binding proteins. Required for association of the 30S and 50S subunits to form the 70S ribosome, for tRNA binding and peptide bond formation. It has been suggested to have peptidyltransferase activity; this is somewhat controversial. Makes several contacts with the 16S rRNA in the 70S ribosome. The chain is Large ribosomal subunit protein uL2 from Xanthobacter autotrophicus (strain ATCC BAA-1158 / Py2).